A 277-amino-acid polypeptide reads, in one-letter code: Energy-coupling factor transporter ATP-binding protein EcfA1 (277 aa).

The ABC transporter domain occupies 4-238; that stretch reads IETQDLCHTY…PDLLSSVRLD (235 aa). Position 37–44 (37–44) interacts with ATP; the sequence is GPNGAGKS.

This sequence belongs to the ABC transporter superfamily. Energy-coupling factor EcfA family. As to quaternary structure, forms a stable energy-coupling factor (ECF) transporter complex composed of 2 membrane-embedded substrate-binding proteins (S component), 2 ATP-binding proteins (A component) and 2 transmembrane proteins (T component).

The protein localises to the cell membrane. In terms of biological role, ATP-binding (A) component of a common energy-coupling factor (ECF) ABC-transporter complex. Unlike classic ABC transporters this ECF transporter provides the energy necessary to transport a number of different substrates. The polypeptide is Energy-coupling factor transporter ATP-binding protein EcfA1 (Methanospirillum hungatei JF-1 (strain ATCC 27890 / DSM 864 / NBRC 100397 / JF-1)).